The primary structure comprises 525 residues: Glutamate--cysteine ligase (525 aa).

It belongs to the glutamate--cysteine ligase type 1 family. Type 1 subfamily.

It catalyses the reaction L-cysteine + L-glutamate + ATP = gamma-L-glutamyl-L-cysteine + ADP + phosphate + H(+). It functions in the pathway sulfur metabolism; glutathione biosynthesis; glutathione from L-cysteine and L-glutamate: step 1/2. This chain is Glutamate--cysteine ligase, found in Hahella chejuensis (strain KCTC 2396).